The sequence spans 88 residues: Small ribosomal subunit protein eS21 (88 aa).

The protein belongs to the eukaryotic ribosomal protein eS21 family. As to quaternary structure, component of the small ribosomal subunit. Mature ribosomes consist of a small (40S) and a large (60S) subunit. The 40S subunit contains about 33 different proteins and 1 molecule of RNA (18S). The 60S subunit contains about 49 different proteins and 3 molecules of RNA (25S, 5.8S and 5S).

Its subcellular location is the cytoplasm. Required for the processing of the 20S rRNA-precursor to mature 18S rRNA in a late step of the maturation of 40S ribosomal subunits. Has a physiological role leading to 18S rRNA stability. In Aspergillus fumigatus (strain ATCC MYA-4609 / CBS 101355 / FGSC A1100 / Af293) (Neosartorya fumigata), this protein is Small ribosomal subunit protein eS21 (rps21).